Consider the following 193-residue polypeptide: Chlorate reductase assembly chaperone protein (193 aa).

This sequence belongs to the type II DMSO reductase enzyme chaperone family.

It is found in the cytoplasm. In terms of biological role, may function as a system-specific chaperone protein essential for the assembly of an active chlorate reductase ClrABC. This is Chlorate reductase assembly chaperone protein (clrD) from Ideonella dechloratans.